We begin with the raw amino-acid sequence, 412 residues long: Stachydrine N-demethylase (412 aa).

The 106-residue stretch at 45–150 (LYAVPVCQLA…LRNLDGLIYI (106 aa)) folds into the Rieske domain. C86, H88, C106, and H109 together coordinate [2Fe-2S] cluster. Residues H204, H209, and D360 each contribute to the Fe cation site.

It belongs to the bacterial ring-hydroxylating dioxygenase alpha subunit family. In terms of assembly, homotrimer. The system is probably composed of an oxygenase subunit (Stc2) and two reductase subunits (Stc3 and Stc4). It depends on [2Fe-2S] cluster as a cofactor. Requires Fe cation as cofactor.

It carries out the reaction L-proline betaine + NADH + O2 + H(+) = N-methyl-L-proline + formaldehyde + NAD(+) + H2O. The catalysed reaction is L-proline betaine + NADPH + O2 + H(+) = N-methyl-L-proline + formaldehyde + NADP(+) + H2O. Functionally, monooxygenase involved in the catabolism of stachydrine (L-proline betaine), a source of carbon and nitrogen. Part of a Rieske-type oxygenase system that catalyzes the demethylation of stachydrine to produce N-methyl-L-proline (monomethylproline). Stc2 is the catalytic subunit. This chain is Stachydrine N-demethylase, found in Rhizobium meliloti (strain 1021) (Ensifer meliloti).